We begin with the raw amino-acid sequence, 363 residues long: 3-isopropylmalate dehydrogenase (363 aa).

Residue glycine 78 to glutamate 91 coordinates NAD(+). 4 residues coordinate substrate: arginine 99, arginine 109, arginine 138, and aspartate 227. Residues aspartate 227, aspartate 251, and aspartate 255 each contribute to the Mg(2+) site. Glycine 285 to asparagine 297 lines the NAD(+) pocket.

It belongs to the isocitrate and isopropylmalate dehydrogenases family. LeuB type 1 subfamily. Homodimer. Mg(2+) is required as a cofactor. Requires Mn(2+) as cofactor.

The protein localises to the cytoplasm. It carries out the reaction (2R,3S)-3-isopropylmalate + NAD(+) = 4-methyl-2-oxopentanoate + CO2 + NADH. The protein operates within amino-acid biosynthesis; L-leucine biosynthesis; L-leucine from 3-methyl-2-oxobutanoate: step 3/4. In terms of biological role, catalyzes the oxidation of 3-carboxy-2-hydroxy-4-methylpentanoate (3-isopropylmalate) to 3-carboxy-4-methyl-2-oxopentanoate. The product decarboxylates to 4-methyl-2 oxopentanoate. This chain is 3-isopropylmalate dehydrogenase, found in Shigella boydii serotype 4 (strain Sb227).